Consider the following 1869-residue polypeptide: Chitin synthase 6 (1869 aa).

Residues 1-23 are disordered; sequence MAMNLPPLAGSGGAHTQPSLPAL. Residues 1-778 enclose the Myosin motor domain; sequence MAMNLPPLAG…EIAHLSEASL (778 aa). Residue 104 to 111 coordinates ATP; it reads GESGSGKS. N-linked (GlcNAc...) asparagine glycosylation is found at N123, N417, N426, and N557. Disordered regions lie at residues 593–612 and 620–640; these read KPMR…ARNQ and AEEE…AAKA. Over residues 629 to 640 the composition is skewed to low complexity; it reads ENNSQAGGAAKA. N-linked (GlcNAc...) asparagine glycans are attached at residues N630 and N657. Residues 655 to 679 are actin-binding; that stretch reads LDNVTKAVADPSTNSYFVFCLKPND. 2 helical membrane passes run 886 to 906 and 925 to 945; these read WLFM…RFIG and LIIW…PMLI. The 62-residue stretch at 949–1010 folds into the Cytochrome b5 heme-binding domain; it reads QHVYSAAELS…YAGKDATSLF (62 aa). N-linked (GlcNAc...) asparagine glycans are attached at residues N1037, N1062, and N1165. The helical transmembrane segment at 1201 to 1221 threads the bilayer; it reads LVLAISIMLVTIIAFKFFAAL. 2 N-linked (GlcNAc...) asparagine glycosylation sites follow: N1458 and N1564. 3 consecutive transmembrane segments (helical) span residues 1596-1616, 1622-1642, and 1649-1669; these read LSTV…VMVI, VPVT…IIFI, and MIGW…GLPL. A glycan (N-linked (GlcNAc...) asparagine) is linked at N1778. The DEK-C domain maps to 1811-1866; sequence LPSDDALLAEIREILRTADLMTVTKKGIKQELERRFGVPLDAKRAYINSATEALLS.

The protein in the N-terminal section; belongs to the TRAFAC class myosin-kinesin ATPase superfamily. Myosin family. It in the C-terminal section; belongs to the chitin synthase family. Class V subfamily.

Its subcellular location is the cell membrane. The enzyme catalyses [(1-&gt;4)-N-acetyl-beta-D-glucosaminyl](n) + UDP-N-acetyl-alpha-D-glucosamine = [(1-&gt;4)-N-acetyl-beta-D-glucosaminyl](n+1) + UDP + H(+). Polymerizes chitin, a structural polymer of the cell wall and septum, by transferring the sugar moiety of UDP-GlcNAc to the non-reducing end of the growing chitin polymer. Plays a role in cell wall integrity and is involved in tolerance to hyperosmotic conditions. Required to successfully penetrate the host plants and thus plays a key role in pathogenicity. The chain is Chitin synthase 6 from Verticillium dahliae (strain VdLs.17 / ATCC MYA-4575 / FGSC 10137) (Verticillium wilt).